We begin with the raw amino-acid sequence, 106 residues long: ATP-dependent Clp protease adapter protein ClpS (106 aa).

The protein belongs to the ClpS family. In terms of assembly, binds to the N-terminal domain of the chaperone ClpA.

Its function is as follows. Involved in the modulation of the specificity of the ClpAP-mediated ATP-dependent protein degradation. The chain is ATP-dependent Clp protease adapter protein ClpS from Methylococcus capsulatus (strain ATCC 33009 / NCIMB 11132 / Bath).